A 405-amino-acid polypeptide reads, in one-letter code: Glucose-1-phosphate adenylyltransferase 1 (405 aa).

Residues tyrosine 96, glycine 161, 176–177 (EK), and serine 194 each bind alpha-D-glucose 1-phosphate.

This sequence belongs to the bacterial/plant glucose-1-phosphate adenylyltransferase family. In terms of assembly, homotetramer.

It catalyses the reaction alpha-D-glucose 1-phosphate + ATP + H(+) = ADP-alpha-D-glucose + diphosphate. Its pathway is glycan biosynthesis; glycogen biosynthesis. Involved in the biosynthesis of ADP-glucose, a building block required for the elongation reactions to produce glycogen. Catalyzes the reaction between ATP and alpha-D-glucose 1-phosphate (G1P) to produce pyrophosphate and ADP-Glc. This chain is Glucose-1-phosphate adenylyltransferase 1, found in Vibrio parahaemolyticus serotype O3:K6 (strain RIMD 2210633).